Here is a 251-residue protein sequence, read N- to C-terminus: uncharacterized protein (251 aa).

36 to 43 (GKQGTGKT) serves as a coordination point for ATP. Residues 230 to 251 (SDNKTENPSNPSLLTKIDDVTR) are disordered.

In terms of biological role, this protein may be involved in virus assembly. Essential for virus function. This is an uncharacterized protein from Sulfolobus spindle-shape virus 1 (SSV1).